Reading from the N-terminus, the 252-residue chain is Small ribosomal subunit protein eS1A (252 aa).

Ala-2 carries the post-translational modification N-acetylalanine; partial.

The protein belongs to the eukaryotic ribosomal protein eS1 family. Component of the small ribosomal subunit (SSU). Mature yeast ribosomes consist of a small (40S) and a large (60S) subunit. The 40S small subunit contains 1 molecule of ribosomal RNA (18S rRNA) and at least 33 different proteins. The large 60S subunit contains 3 rRNA molecules (25S, 5.8S and 5S rRNA) and at least 46 different proteins. eS1 interacts directly with uS11 and eS26, which form part of the mRNA exit tunnel.

It is found in the cytoplasm. Its function is as follows. Component of the ribosome, a large ribonucleoprotein complex responsible for the synthesis of proteins in the cell. The small ribosomal subunit (SSU) binds messenger RNAs (mRNAs) and translates the encoded message by selecting cognate aminoacyl-transfer RNA (tRNA) molecules. The large subunit (LSU) contains the ribosomal catalytic site termed the peptidyl transferase center (PTC), which catalyzes the formation of peptide bonds, thereby polymerizing the amino acids delivered by tRNAs into a polypeptide chain. The nascent polypeptides leave the ribosome through a tunnel in the LSU and interact with protein factors that function in enzymatic processing, targeting, and the membrane insertion of nascent chains at the exit of the ribosomal tunnel. The polypeptide is Small ribosomal subunit protein eS1A (rps101) (Schizosaccharomyces pombe (strain 972 / ATCC 24843) (Fission yeast)).